The sequence spans 340 residues: Organic solute transporter subunit alpha (340 aa).

Topologically, residues 1–52 are extracellular; sequence MEPDRTQIRLDPRYTADLLEILKTNYSVPSACFSYPPTAAQLLRALGPVDIS. N25 carries N-linked (GlcNAc...) asparagine glycosylation. The helical transmembrane segment at 53-73 threads the bilayer; it reads LMVIMTLFVLGSIAIFLEAAV. Topologically, residues 74–87 are cytoplasmic; the sequence is YLHKNTRCPIKRKT. A helical membrane pass occupies residues 88–108; that stretch reads LIWCSSSPTIVSAFSCFGLWI. Topologically, residues 109–110 are extracellular; it reads PR. The chain crosses the membrane as a helical span at residues 111-131; sequence ALTLVEMAITTFYSMCFYLLM. Topologically, residues 132 to 186 are cytoplasmic; sequence QAMVEGFGGKEAVLRTLKDTPVMIHTGPCCCCCPCCPRIKITRKRLQLLLLGPIQ. The chain crosses the membrane as a helical span at residues 187–207; the sequence is YAFFKISLTLVGLFLIPDGIF. The Extracellular segment spans residues 208 to 219; sequence DPSDISEGSTAL. A helical transmembrane segment spans residues 220-240; that stretch reads WINTFLGVSTLSALWTIGIIF. Topologically, residues 241-255 are cytoplasmic; it reads RQARLHLGEQNIGAK. The helical transmembrane segment at 256–276 threads the bilayer; that stretch reads FVLFQALLILSALQPSIFSVL. The Extracellular segment spans residues 277–295; sequence ASGGQIACSPPFSSKIRSQ. The helical transmembrane segment at 296 to 316 threads the bilayer; the sequence is VMNCHLLILESFLITVLTRIY. The Cytoplasmic portion of the chain corresponds to 317-340; that stretch reads YRRKDDKLGYEPFSSPDQDLNLKA. Residue S330 is modified to Phosphoserine.

It belongs to the OST-alpha family. In terms of assembly, interacts with SLC51B. The Ost-alpha/Ost-beta complex is a heterodimer composed of alpha (SLC51A) and beta (SLC51B) subunit.

The protein localises to the cell membrane. It is found in the endoplasmic reticulum membrane. The enzyme catalyses taurocholate(out) = taurocholate(in). It carries out the reaction estrone 3-sulfate(out) = estrone 3-sulfate(in). It catalyses the reaction dehydroepiandrosterone 3-sulfate(out) = dehydroepiandrosterone 3-sulfate(in). The catalysed reaction is tauroursodeoxycholate(out) = tauroursodeoxycholate(in). The enzyme catalyses glycoursodeoxycholate(out) = glycoursodeoxycholate(in). It carries out the reaction glycocholate(out) = glycocholate(in). It catalyses the reaction taurochenodeoxycholate(out) = taurochenodeoxycholate(in). The catalysed reaction is glycochenodeoxycholate(out) = glycochenodeoxycholate(in). The enzyme catalyses taurodeoxycholate(out) = taurodeoxycholate(in). It carries out the reaction glycodeoxycholate(out) = glycodeoxycholate(in). It catalyses the reaction prostaglandin E2(out) = prostaglandin E2(in). Functionally, essential component of the Ost-alpha/Ost-beta complex, a heterodimer that acts as the intestinal basolateral transporter responsible for bile acid export from enterocytes into portal blood. Efficiently transports the major species of bile acids (taurocholate). Taurine conjugates are transported more efficiently across the basolateral membrane than glycine-conjugated bile acids. Can also transport steroids such as estrone 3-sulfate and dehydroepiandrosterone 3-sulfate, therefore playing a role in the enterohepatic circulation of sterols. Able to transport eicosanoids such as prostaglandin E2. This chain is Organic solute transporter subunit alpha (SLC51A), found in Bos taurus (Bovine).